Here is a 236-residue protein sequence, read N- to C-terminus: Small ribosomal subunit protein uS2c (236 aa).

This sequence belongs to the universal ribosomal protein uS2 family.

It localises to the plastid. The protein localises to the chloroplast. In Chaetosphaeridium globosum (Charophycean green alga), this protein is Small ribosomal subunit protein uS2c (rps2).